We begin with the raw amino-acid sequence, 949 residues long: Insulin receptor substrate 1 (949 aa).

Residues 8 to 109 (GMALSGYLKK…WLDKLLVLQR (102 aa)) enclose the PH domain. The IRS-type PTB domain maps to 122 to 236 (YDQVWQVVIQ…SAMSAKTESN (115 aa)). A disordered region spans residues 247–270 (PDLSHEPMRKRSSSANEASKPINV). 3 positions are modified to phosphoserine: S286, S287, and S342. Polar residues predominate over residues 304–345 (RNGTLSESSNQTYFGSNHGLRSNTISGNRPHSTNKHSNSPTF). A disordered region spans residues 304 to 373 (RNGTLSESSN…SDDNGSYSHY (70 aa)). At Y410 the chain carries Phosphotyrosine; by INSR. A YXXM motif 1 motif is present at residues 410–413 (YIPM). The segment at 530 to 556 (RSQSSITKEGSGYGTSGNRQKKSTSAP) is disordered. A Phosphoserine modification is found at S554. Residues 640-643 (YLEM) carry the YXXM motif 2 motif. The span at 696-706 (REQTTSEEKKS) shows a compositional bias: basic and acidic residues. Positions 696–718 (REQTTSEEKKSNSPLNEKPFSLK) are disordered. The residue at position 892 (Y892) is a Phosphotyrosine; by INSR. The segment at 906–949 (AKYLKRGSRESPPVSACPEDGNTYAKIDFDQSDSSSSSSNIFNT) is disordered. Phosphoserine occurs at positions 913 and 916. Y929 carries the phosphotyrosine; by INSR modification. The segment covering 937-949 (SDSSSSSSNIFNT) has biased composition (low complexity).

Bindings to phosphatidylinositol 3-kinase and SHP2.

In terms of biological role, activates phosphatidylinositol 3-kinase when bound to the regulatory p85 subunit. May mediate the control of various cellular processes by insulin-like peptides. When phosphorylated by the insulin receptor binds specifically to various cellular proteins containing SH2 domains. Involved in control of cell proliferation, cell size, and body and organ growth throughout development. Also has a role in a signaling pathway controlling the physiological response required to endure periods of low nutrient conditions. Insulin/insulin-like growth factor (IGF) signaling pathway has a role in regulating aging and is necessary in the ovary for vitellogenic maturation. The protein is Insulin receptor substrate 1 of Drosophila yakuba (Fruit fly).